The primary structure comprises 270 residues: Putative pyruvate, phosphate dikinase regulatory protein (270 aa).

151-158 (GVSRTSKT) contacts ADP.

This sequence belongs to the pyruvate, phosphate/water dikinase regulatory protein family. PDRP subfamily.

The enzyme catalyses N(tele)-phospho-L-histidyl/L-threonyl-[pyruvate, phosphate dikinase] + ADP = N(tele)-phospho-L-histidyl/O-phospho-L-threonyl-[pyruvate, phosphate dikinase] + AMP + H(+). The catalysed reaction is N(tele)-phospho-L-histidyl/O-phospho-L-threonyl-[pyruvate, phosphate dikinase] + phosphate + H(+) = N(tele)-phospho-L-histidyl/L-threonyl-[pyruvate, phosphate dikinase] + diphosphate. In terms of biological role, bifunctional serine/threonine kinase and phosphorylase involved in the regulation of the pyruvate, phosphate dikinase (PPDK) by catalyzing its phosphorylation/dephosphorylation. The chain is Putative pyruvate, phosphate dikinase regulatory protein from Streptococcus gordonii (strain Challis / ATCC 35105 / BCRC 15272 / CH1 / DL1 / V288).